Reading from the N-terminus, the 491-residue chain is Cytochrome P450 2B2 (491 aa).

At S128 the chain carries Phosphoserine; by PKA. C436 serves as a coordination point for heme.

The protein belongs to the cytochrome P450 family. Heme serves as cofactor. In terms of processing, phosphorylation is accompanied by a decrease in enzyme activity.

The protein localises to the endoplasmic reticulum membrane. The protein resides in the microsome membrane. The catalysed reaction is an organic molecule + reduced [NADPH--hemoprotein reductase] + O2 = an alcohol + oxidized [NADPH--hemoprotein reductase] + H2O + H(+). In terms of biological role, cytochromes P450 are a group of heme-thiolate monooxygenases. In liver microsomes, this enzyme is involved in an NADPH-dependent electron transport pathway. It oxidizes a variety of structurally unrelated compounds, including steroids, fatty acids, and xenobiotics. The sequence is that of Cytochrome P450 2B2 (Cyp2b2) from Rattus norvegicus (Rat).